A 625-amino-acid chain; its full sequence is Keratin, type II cytoskeletal 1 (625 aa).

A compositionally biased stretch (low complexity) spans 1 to 12 (MSFQCSSRSLCR). Positions 1–27 (MSFQCSSRSLCRSGGGGGGRNFSSGSA) are disordered. The tract at residues 1 to 178 (MSFQCSSRSL…DPQIQKVKSQ (178 aa)) is head. R12 is modified (omega-N-methylarginine). Residues S23 and S26 each carry the phosphoserine modification. The residue at position 51 (R51) is an Omega-N-methylarginine. S69 carries the post-translational modification Phosphoserine. Residues 171–319 (QIQKVKSQER…DIDFFSTLYQ (149 aa)) are a coiled coil. Residues 179–214 (EREQIKSLNDKFASFIDKVRFLEQQNQVLQTKWELL) are coil 1A. One can recognise an IF rod domain in the interval 179–492 (EREQIKSLND…KLLEGEEIRM (314 aa)). The linker 1 stretch occupies residues 215-233 (QQVDTSTRTQNLDPFFESY). Residues 234–325 (ISNLRRQVDS…TLYQMELSQM (92 aa)) are coil 1B. K275 carries the N6,N6-dimethyllysine modification. The tract at residues 326-349 (QTQISETNVVLSMDNNRTLDLDGI) is linker 12. The segment at 350-488 (IAEVKAQYDS…ATYRKLLEGE (139 aa)) is coil 2. Residues 388–475 (DSVKNTKMEI…ELMNTKLALD (88 aa)) are a coiled coil. A tail region spans residues 489-625 (EIRMSGECTP…VSTTYSRGTN (137 aa)). Disordered stretches follow at residues 496-525 (CTPNVSVSVSTSHTSMSGTSSRGGGRYGSG) and 560-625 (SGGG…RGTN). Positions 500 to 515 (VSVSVSTSHTSMSGTS) are enriched in low complexity. 2 stretches are compositionally biased toward gly residues: residues 516-525 (SRGGGRYGSG) and 560-606 (SGGG…GGVK). Residues R517, R574, and R596 each carry the omega-N-methylarginine modification. The segment covering 613–625 (VKFVSTTYSRGTN) has biased composition (polar residues).

Belongs to the intermediate filament family. In terms of assembly, heterotetramer of two type I and two type II keratins. Heterodimer with KRT10. Two heterodimers of KRT1 and KRT10 form a heterotetramer. Forms a heterodimer with KRT14; the interaction is more abundant in the absence of KRT5. Interacts with ITGB1 in the presence of RACK1 and SRC, and with RACK1. Interacts with C1QBP; the association represents a cell surface kininogen receptor. Interacts with EPPK1; interaction is dependent of higher-order structure of intermediate filament. In terms of processing, undergoes deimination of some arginine residues (citrullination).

The protein localises to the cell membrane. The protein resides in the cytoplasm. Its function is as follows. May regulate the activity of kinases such as PKC and SRC via binding to integrin beta-1 (ITB1) and the receptor of activated protein C kinase 1 (RACK1). In complex with C1QBP is a high affinity receptor for kininogen-1/HMWK. This chain is Keratin, type II cytoskeletal 1, found in Rattus norvegicus (Rat).